The chain runs to 252 residues: Small ribosomal subunit protein uS3 (252 aa).

Residues Ile39–Val109 form the KH type-2 domain. The segment covering Glu221 to Ser241 has biased composition (basic and acidic residues). The disordered stretch occupies residues Glu221–Gly252. Positions Gln242–Gly252 are enriched in basic residues.

The protein belongs to the universal ribosomal protein uS3 family. Part of the 30S ribosomal subunit. Forms a tight complex with proteins S10 and S14.

Binds the lower part of the 30S subunit head. Binds mRNA in the 70S ribosome, positioning it for translation. The chain is Small ribosomal subunit protein uS3 from Chlorobium luteolum (strain DSM 273 / BCRC 81028 / 2530) (Pelodictyon luteolum).